An 88-amino-acid polypeptide reads, in one-letter code: Translation initiation factor IF-1 1 (88 aa).

Residues 1-72 enclose the S1-like domain; the sequence is MAKEELIELD…TKGRINFRHK (72 aa).

The protein belongs to the IF-1 family. As to quaternary structure, component of the 30S ribosomal translation pre-initiation complex which assembles on the 30S ribosome in the order IF-2 and IF-3, IF-1 and N-formylmethionyl-tRNA(fMet); mRNA recruitment can occur at any time during PIC assembly.

It is found in the cytoplasm. Functionally, one of the essential components for the initiation of protein synthesis. Stabilizes the binding of IF-2 and IF-3 on the 30S subunit to which N-formylmethionyl-tRNA(fMet) subsequently binds. Helps modulate mRNA selection, yielding the 30S pre-initiation complex (PIC). Upon addition of the 50S ribosomal subunit IF-1, IF-2 and IF-3 are released leaving the mature 70S translation initiation complex. This chain is Translation initiation factor IF-1 1, found in Burkholderia mallei (strain ATCC 23344).